The sequence spans 92 residues: Small ribosomal subunit protein uS19 (92 aa).

It belongs to the universal ribosomal protein uS19 family.

Functionally, protein S19 forms a complex with S13 that binds strongly to the 16S ribosomal RNA. This Aliivibrio fischeri (strain ATCC 700601 / ES114) (Vibrio fischeri) protein is Small ribosomal subunit protein uS19.